The following is a 442-amino-acid chain: Large ribosomal subunit protein mL65 (442 aa).

The protein belongs to the mitochondrion-specific ribosomal protein mL65 family. As to quaternary structure, component of the mitochondrial ribosome small subunit (28S) which comprises a 12S rRNA and about 30 distinct proteins.

The protein localises to the mitochondrion. This Mus musculus (Mouse) protein is Large ribosomal subunit protein mL65 (Mrps30).